We begin with the raw amino-acid sequence, 297 residues long: Homeobox protein HMX3 (297 aa).

Disordered regions lie at residues 24–43 (NSDS…KAGL) and 96–172 (AAQK…RKKK). 2 stretches are compositionally biased toward basic and acidic residues: residues 109 to 123 (TDRD…SDPD) and 145 to 166 (EDGK…ADKK). The segment at residues 170–229 (KKKTRTVFSRSQVFQLESTFDMKRYLSSSERAGLAASLHLTETQVKIWFQNRRNKWKRQL) is a DNA-binding region (homeobox).

It belongs to the HMX homeobox family. Expressed in the ear placode and vesicle and in cells forming the vestibulo-acoustic ganglion. Also expressed in the lateral line.

It is found in the nucleus. Its function is as follows. Transcription factor involved in specification of neuronal cell types and which is required for inner ear and hypothalamus development. Binds to the 5'-CAAGTG-3' core sequence. The polypeptide is Homeobox protein HMX3 (hmx3) (Danio rerio (Zebrafish)).